Here is a 325-residue protein sequence, read N- to C-terminus: Lactonase drp35 (325 aa).

Residues Glu-46, Thr-108, Gly-110, Asp-128, Thr-131, Tyr-133, Asp-136, Asn-183, Asp-234, and Ser-235 each coordinate Ca(2+). Asp-234 (proton donor) is an active-site residue.

This sequence belongs to the SMP-30/CGR1 family. Requires Ca(2+) as cofactor.

It is found in the cytoplasm. Its function is as follows. Exhibits lactonase activity. Acts in cells with perturbed membrane integrity and is possibly related to the membrane homeostasis. The polypeptide is Lactonase drp35 (drp35) (Staphylococcus epidermidis (strain ATCC 35984 / DSM 28319 / BCRC 17069 / CCUG 31568 / BM 3577 / RP62A)).